A 361-amino-acid chain; its full sequence is MTVPHIPRGPVMADIAAFRLTEEEKQRLLDPAIGGIILFRRNFQNIEQLKTLTAEIKALRTPELIIAVDHEGGRVQRFIEGFTRLPAMSTLGEIWDSEGAETAETHAEHIGWVLATELSACGIDLSFTPVLDLDWGNCAVIGNRSFHRNPEAVARLALALQKGLAKGGMKSCGKHFPGHGFVEGDSHLVLPEDGRSLDELEAADLAPFRIMSREGMAAVMPAHVVYPQVDTKPAGFSEIWLKQILRRDIGFKGVIFSDDLTMEGACGAGGIKERARISFEAGCDIILVCNRPDLVDELRDGFTIPDNQDLAGRWQYMENSLGHEAVQAVIQTTGFQAAQAFVAGLASPQDTAGGVKVGEAF.

Substrate contacts are provided by residues D69, R77, R144, and 174 to 175 (KH). Catalysis depends on H187, which acts as the Proton donor/acceptor. Catalysis depends on D258, which acts as the Nucleophile.

It belongs to the glycosyl hydrolase 3 family. NagZ subfamily.

It localises to the cytoplasm. The enzyme catalyses Hydrolysis of terminal non-reducing N-acetyl-D-hexosamine residues in N-acetyl-beta-D-hexosaminides.. Its pathway is cell wall biogenesis; peptidoglycan recycling. Functionally, plays a role in peptidoglycan recycling by cleaving the terminal beta-1,4-linked N-acetylglucosamine (GlcNAc) from peptide-linked peptidoglycan fragments, giving rise to free GlcNAc, anhydro-N-acetylmuramic acid and anhydro-N-acetylmuramic acid-linked peptides. The sequence is that of Beta-hexosaminidase from Neisseria gonorrhoeae (strain NCCP11945).